Here is a 235-residue protein sequence, read N- to C-terminus: V-type proton ATPase subunit E2 (235 aa).

Position 1 is an N-acetylmethionine (M1). A coiled-coil region spans residues 8 to 64 (KQIQQMVRFIRQEAEEKANEISISAEEEFNIERLQLLESAKRKLRQDYDRKLKQVDI).

Belongs to the V-ATPase E subunit family. In terms of assembly, V-ATPase is a heteromultimeric enzyme composed of a peripheral catalytic V1 complex (components A to H) attached to an integral membrane V0 proton pore complex (components: a, c, c'', d and e).

The protein resides in the vacuole membrane. Functionally, subunit of the peripheral V1 complex of vacuolar ATPase essential for assembly or catalytic function. V-ATPase is responsible for acidifying a variety of intracellular compartments in eukaryotic cells. The polypeptide is V-type proton ATPase subunit E2 (VHA-E2) (Arabidopsis thaliana (Mouse-ear cress)).